Reading from the N-terminus, the 143-residue chain is FAD synthase (143 aa).

ATP contacts are provided by residues T9 to F10, H14 to H17, and D92.

This sequence belongs to the archaeal FAD synthase family. In terms of assembly, homodimer. A divalent metal cation serves as cofactor.

The catalysed reaction is FMN + ATP + H(+) = FAD + diphosphate. The protein operates within cofactor biosynthesis; FAD biosynthesis; FAD from FMN: step 1/1. Catalyzes the transfer of the AMP portion of ATP to flavin mononucleotide (FMN) to produce flavin adenine dinucleotide (FAD) coenzyme. The chain is FAD synthase from Methanococcoides burtonii (strain DSM 6242 / NBRC 107633 / OCM 468 / ACE-M).